The sequence spans 354 residues: Histidinol-phosphate aminotransferase (354 aa).

An N6-(pyridoxal phosphate)lysine modification is found at Lys-210.

Belongs to the class-II pyridoxal-phosphate-dependent aminotransferase family. Histidinol-phosphate aminotransferase subfamily. Homodimer. The cofactor is pyridoxal 5'-phosphate.

The enzyme catalyses L-histidinol phosphate + 2-oxoglutarate = 3-(imidazol-4-yl)-2-oxopropyl phosphate + L-glutamate. It participates in amino-acid biosynthesis; L-histidine biosynthesis; L-histidine from 5-phospho-alpha-D-ribose 1-diphosphate: step 7/9. This chain is Histidinol-phosphate aminotransferase, found in Clostridium botulinum (strain Okra / Type B1).